We begin with the raw amino-acid sequence, 526 residues long: Light-independent protochlorophyllide reductase subunit B (526 aa).

D36 provides a ligand contact to [4Fe-4S] cluster. D290 acts as the Proton donor in catalysis. 425 to 426 contacts substrate; sequence GL.

It belongs to the ChlB/BchB/BchZ family. In terms of assembly, protochlorophyllide reductase is composed of three subunits; ChlL, ChlN and ChlB. Forms a heterotetramer of two ChlB and two ChlN subunits. [4Fe-4S] cluster serves as cofactor.

It carries out the reaction chlorophyllide a + oxidized 2[4Fe-4S]-[ferredoxin] + 2 ADP + 2 phosphate = protochlorophyllide a + reduced 2[4Fe-4S]-[ferredoxin] + 2 ATP + 2 H2O. It functions in the pathway porphyrin-containing compound metabolism; chlorophyll biosynthesis (light-independent). Functionally, component of the dark-operative protochlorophyllide reductase (DPOR) that uses Mg-ATP and reduced ferredoxin to reduce ring D of protochlorophyllide (Pchlide) to form chlorophyllide a (Chlide). This reaction is light-independent. The NB-protein (ChlN-ChlB) is the catalytic component of the complex. This Prochlorococcus marinus (strain MIT 9515) protein is Light-independent protochlorophyllide reductase subunit B.